The sequence spans 37 residues: Calcitonin gene-related peptide (37 aa).

An intrachain disulfide couples Cys-2 to Cys-7. Phe-37 is modified (phenylalanine amide).

It belongs to the calcitonin family.

CGRP induces vasodilation. It dilates a variety of vessels including the coronary, cerebral and systemic vasculature. Its abundance in the CNS also points toward a neurotransmitter or neuromodulator role. This Pelophylax ridibundus (Marsh frog) protein is Calcitonin gene-related peptide.